Consider the following 216-residue polypeptide: uncharacterized protein (216 aa).

Its subcellular location is the plastid. It is found in the chloroplast. This is an uncharacterized protein from Pyropia yezoensis (Susabi-nori).